The following is a 338-amino-acid chain: Solute carrier family 35 member G5 (338 aa).

The tract at residues Met1–Ala21 is disordered. 9 consecutive transmembrane segments (helical) span residues Thr37–Leu57, Leu67–Leu87, Cys105–Val125, Cys160–Leu180, Ala190–Tyr210, Thr221–Leu241, Leu250–Val270, Leu281–Leu301, and Val305–Ala325. In terms of domain architecture, EamA 1 spans Leu49–Gly174. Positions Tyr272–Ala325 constitute an EamA 2 domain.

Belongs to the SLC35G solute transporter family.

It localises to the membrane. The protein is Solute carrier family 35 member G5 (SLC35G5) of Pan troglodytes (Chimpanzee).